The primary structure comprises 505 residues: Phosphoglycerate kinase A (505 aa).

(2R)-3-phosphoglycerate contacts are provided by valine 32, aspartate 33, phenylalanine 34, asparagine 35, arginine 48, serine 70, histidine 71, glycine 73, arginine 74, arginine 224, histidine 260, and arginine 261. Positions 306 and 307 each coordinate ADP. Residue glycine 306 participates in CDP binding. The AMP site is built by alanine 307 and lysine 308. Alanine 307 lines the ATP pocket. Mg(2+) is bound at residue alanine 307. Residue lysine 308 participates in (2R)-3-phosphoglycerate binding. Glutamate 311 serves as a coordination point for CDP. Mg(2+) is bound at residue glutamate 311. Residues lysine 312 and glycine 330 each contribute to the ADP site. An AMP-binding site is contributed by lysine 312. Lysine 312 is a binding site for ATP. Residue glycine 330 coordinates CDP. Residues alanine 331 and alanine 403 each coordinate AMP. ATP is bound by residues alanine 331 and alanine 403. ADP contacts are provided by alanine 403 and asparagine 427. 2 residues coordinate CDP: glycine 428 and phenylalanine 433. Residues phenylalanine 433, glutamate 434, glutamate 466, and serine 467 each coordinate ADP. Residue glutamate 434 participates in AMP binding. 3 residues coordinate ATP: glutamate 434, glutamate 466, and serine 467. Glutamate 466 contributes to the Mg(2+) binding site.

Belongs to the phosphoglycerate kinase family. Monomer. Mg(2+) serves as cofactor.

The catalysed reaction is (2R)-3-phosphoglycerate + ATP = (2R)-3-phospho-glyceroyl phosphate + ADP. It functions in the pathway carbohydrate degradation; glycolysis; pyruvate from D-glyceraldehyde 3-phosphate: step 2/5. The chain is Phosphoglycerate kinase A from Trypanosoma brucei brucei.